The chain runs to 115 residues: NADH-ubiquinone oxidoreductase chain 3 (115 aa).

3 helical membrane passes run 3 to 23, 55 to 75, and 84 to 104; these read LLMA…IAFW, FFLV…LLPL, and LSAM…GLMY.

This sequence belongs to the complex I subunit 3 family. In terms of assembly, core subunit of respiratory chain NADH dehydrogenase (Complex I) which is composed of 45 different subunits. Interacts with TMEM186. Interacts with TMEM242.

The protein resides in the mitochondrion inner membrane. It carries out the reaction a ubiquinone + NADH + 5 H(+)(in) = a ubiquinol + NAD(+) + 4 H(+)(out). Core subunit of the mitochondrial membrane respiratory chain NADH dehydrogenase (Complex I) which catalyzes electron transfer from NADH through the respiratory chain, using ubiquinone as an electron acceptor. Essential for the catalytic activity of complex I. The chain is NADH-ubiquinone oxidoreductase chain 3 from Sigmodon ochrognathus (Yellow-nosed cotton rat).